A 546-amino-acid chain; its full sequence is CTP synthase (546 aa).

An amidoligase domain region spans residues 1–265 (MTKYVFVTGG…DEIVCHKLNI (265 aa)). Residue Ser13 participates in CTP binding. Ser13 is a binding site for UTP. ATP contacts are provided by residues 14–19 (SLGKGI) and Asp71. Mg(2+)-binding residues include Asp71 and Glu139. Residues 146-148 (DIE), 186-191 (KTKPTQ), and Lys222 each bind CTP. Residues 186-191 (KTKPTQ) and Lys222 contribute to the UTP site. The Glutamine amidotransferase type-1 domain maps to 290–543 (NIAFVGKYVD…VRAALAHQQK (254 aa)). Position 351 (Gly351) interacts with L-glutamine. The active-site Nucleophile; for glutamine hydrolysis is the Cys378. L-glutamine is bound by residues 379–382 (LGMQ), Glu402, and Arg469. Residues His516 and Glu518 contribute to the active site.

Belongs to the CTP synthase family. Homotetramer.

It carries out the reaction UTP + L-glutamine + ATP + H2O = CTP + L-glutamate + ADP + phosphate + 2 H(+). It catalyses the reaction L-glutamine + H2O = L-glutamate + NH4(+). The catalysed reaction is UTP + NH4(+) + ATP = CTP + ADP + phosphate + 2 H(+). It participates in pyrimidine metabolism; CTP biosynthesis via de novo pathway; CTP from UDP: step 2/2. With respect to regulation, allosterically activated by GTP, when glutamine is the substrate; GTP has no effect on the reaction when ammonia is the substrate. The allosteric effector GTP functions by stabilizing the protein conformation that binds the tetrahedral intermediate(s) formed during glutamine hydrolysis. Inhibited by the product CTP, via allosteric rather than competitive inhibition. Functionally, catalyzes the ATP-dependent amination of UTP to CTP with either L-glutamine or ammonia as the source of nitrogen. Regulates intracellular CTP levels through interactions with the four ribonucleotide triphosphates. The sequence is that of CTP synthase from Thiobacillus denitrificans (strain ATCC 25259 / T1).